The primary structure comprises 142 residues: Hemoglobin subunit alpha (142 aa).

The 141-residue stretch at 2–142 (VLSDANKQEI…LVHQLSSKYR (141 aa)) folds into the Globin domain. Histidine 60 is a binding site for O2. Histidine 89 contributes to the heme b binding site.

Belongs to the globin family. As to quaternary structure, heterotetramer of two alpha chains and two beta chains. In terms of tissue distribution, red blood cells.

Its function is as follows. Involved in oxygen transport from gills to the various peripheral tissues. This chain is Hemoglobin subunit alpha (HBA), found in Bathyraja eatonii (Eaton's skate).